Here is a 659-residue protein sequence, read N- to C-terminus: Threonine--tRNA ligase (659 aa).

Residues 1–60 (MTVYLPDGKPLELPEGATAKDVARALGEGWERRAVGAIVDGELYDLLKPLPQGAKVRLLT) enclose the TGS domain. Residues 252 to 552 (DHRRLGRELE…LIEHFAGDFP (301 aa)) form a catalytic region. Positions 349, 400, and 529 each coordinate Zn(2+).

The protein belongs to the class-II aminoacyl-tRNA synthetase family. In terms of assembly, homodimer. Zn(2+) is required as a cofactor.

It is found in the cytoplasm. It catalyses the reaction tRNA(Thr) + L-threonine + ATP = L-threonyl-tRNA(Thr) + AMP + diphosphate + H(+). Functionally, catalyzes the attachment of threonine to tRNA(Thr) in a two-step reaction: L-threonine is first activated by ATP to form Thr-AMP and then transferred to the acceptor end of tRNA(Thr). Also edits incorrectly charged L-seryl-tRNA(Thr). The sequence is that of Threonine--tRNA ligase from Thermus thermophilus (strain ATCC BAA-163 / DSM 7039 / HB27).